The sequence spans 163 residues: ATP synthase subunit b, sodium ion specific (163 aa).

Residues 9 to 29 (VSIDINMFWQIINFLILMFFF) traverse the membrane as a helical segment.

It belongs to the ATPase B chain family. As to quaternary structure, F-type ATPases have 2 components, F(1) - the catalytic core - and F(0) - the membrane proton channel. F(1) has five subunits: alpha(3), beta(3), gamma(1), delta(1), epsilon(1). F(0) has three main subunits: a(1), b(2) and c(10-14). The alpha and beta chains form an alternating ring which encloses part of the gamma chain. F(1) is attached to F(0) by a central stalk formed by the gamma and epsilon chains, while a peripheral stalk is formed by the delta and b chains.

The protein localises to the cell inner membrane. Its function is as follows. F(1)F(0) ATP synthase produces ATP from ADP in the presence of a proton or sodium gradient. F-type ATPases consist of two structural domains, F(1) containing the extramembraneous catalytic core and F(0) containing the membrane proton channel, linked together by a central stalk and a peripheral stalk. During catalysis, ATP synthesis in the catalytic domain of F(1) is coupled via a rotary mechanism of the central stalk subunits to proton translocation. Component of the F(0) channel, it forms part of the peripheral stalk, linking F(1) to F(0). This is ATP synthase subunit b, sodium ion specific (atpF) from Ilyobacter tartaricus.